Here is a 285-residue protein sequence, read N- to C-terminus: Shikimate dehydrogenase (NADP(+)) (285 aa).

Shikimate-binding positions include 19–21 and Thr66; that span reads SLS. Residue Lys70 is the Proton acceptor of the active site. Asn91 and Asp107 together coordinate shikimate. NADP(+) is bound by residues 129–133 and Leu228; that span reads GSGGA. Tyr230 is a binding site for shikimate. NADP(+) is bound at residue Gly251.

Belongs to the shikimate dehydrogenase family. In terms of assembly, homodimer.

It catalyses the reaction shikimate + NADP(+) = 3-dehydroshikimate + NADPH + H(+). It participates in metabolic intermediate biosynthesis; chorismate biosynthesis; chorismate from D-erythrose 4-phosphate and phosphoenolpyruvate: step 4/7. In terms of biological role, involved in the biosynthesis of the chorismate, which leads to the biosynthesis of aromatic amino acids. Catalyzes the reversible NADPH linked reduction of 3-dehydroshikimate (DHSA) to yield shikimate (SA). The sequence is that of Shikimate dehydrogenase (NADP(+)) from Prochlorococcus marinus (strain MIT 9515).